The primary structure comprises 78 residues: uncharacterized protein (78 aa).

Positions 1-22 (MFKKSVLFATLLSGVMAFSTNA) are cleaved as a signal peptide.

The protein belongs to the BhsA/McbA family.

The protein localises to the periplasm. Functionally, probably involved in reactive chlorine species (RCS) stress resistance. This is an uncharacterized protein from Escherichia coli (strain K12).